The chain runs to 196 residues: Anthranilate synthase component 2 (196 aa).

Positions 4 to 196 constitute a Glutamine amidotransferase type-1 domain; that stretch reads LILIIDNYDS…RDILENFLRM (193 aa). 60–62 is an L-glutamine binding site; sequence GPG. Catalysis depends on C89, which acts as the Nucleophile; for GATase activity. L-glutamine contacts are provided by residues Q93 and 138 to 139; that span reads SL. Active-site for GATase activity residues include H177 and E179.

As to quaternary structure, heterotetramer consisting of two non-identical subunits: a beta subunit (TrpG) and a large alpha subunit (TrpE).

It carries out the reaction chorismate + L-glutamine = anthranilate + pyruvate + L-glutamate + H(+). Its pathway is amino-acid biosynthesis; L-tryptophan biosynthesis; L-tryptophan from chorismate: step 1/5. In terms of biological role, part of a heterotetrameric complex that catalyzes the two-step biosynthesis of anthranilate, an intermediate in the biosynthesis of L-tryptophan. In the first step, the glutamine-binding beta subunit (TrpG) of anthranilate synthase (AS) provides the glutamine amidotransferase activity which generates ammonia as a substrate that, along with chorismate, is used in the second step, catalyzed by the large alpha subunit of AS (TrpE) to produce anthranilate. In the absence of TrpG, TrpE can synthesize anthranilate directly from chorismate and high concentrations of ammonia. The protein is Anthranilate synthase component 2 (trpG) of Methanothermobacter marburgensis (strain ATCC BAA-927 / DSM 2133 / JCM 14651 / NBRC 100331 / OCM 82 / Marburg) (Methanobacterium thermoautotrophicum).